The chain runs to 526 residues: Cytochrome P450 4e2 (526 aa).

The heme site is built by glutamate 307 and cysteine 444.

The protein belongs to the cytochrome P450 family. Requires heme as cofactor.

It is found in the endoplasmic reticulum membrane. The protein resides in the microsome membrane. May be involved in the metabolism of insect hormones and in the breakdown of synthetic insecticides. In Drosophila melanogaster (Fruit fly), this protein is Cytochrome P450 4e2 (Cyp4e2).